Consider the following 131-residue polypeptide: NADPH-dependent 7-cyano-7-deazaguanine reductase (131 aa).

The active-site Thioimide intermediate is C48. The Proton donor role is filled by D55. Substrate contacts are provided by residues 70-72 (VEL) and 89-90 (QE).

This sequence belongs to the GTP cyclohydrolase I family. QueF type 1 subfamily.

It is found in the cytoplasm. The enzyme catalyses 7-aminomethyl-7-carbaguanine + 2 NADP(+) = 7-cyano-7-deazaguanine + 2 NADPH + 3 H(+). It participates in tRNA modification; tRNA-queuosine biosynthesis. Its function is as follows. Catalyzes the NADPH-dependent reduction of 7-cyano-7-deazaguanine (preQ0) to 7-aminomethyl-7-deazaguanine (preQ1). This chain is NADPH-dependent 7-cyano-7-deazaguanine reductase, found in Caldicellulosiruptor bescii (strain ATCC BAA-1888 / DSM 6725 / KCTC 15123 / Z-1320) (Anaerocellum thermophilum).